Consider the following 161-residue polypeptide: Phosphopantetheine adenylyltransferase (161 aa).

Thr-10 contributes to the substrate binding site. ATP is bound by residues 10 to 11 (TF) and His-18. Lys-42, Leu-74, and Arg-88 together coordinate substrate. ATP contacts are provided by residues 89–91 (GLR), Glu-99, and 124–130 (NAFISSS).

This sequence belongs to the bacterial CoaD family. As to quaternary structure, homohexamer. The cofactor is Mg(2+).

It is found in the cytoplasm. The enzyme catalyses (R)-4'-phosphopantetheine + ATP + H(+) = 3'-dephospho-CoA + diphosphate. It functions in the pathway cofactor biosynthesis; coenzyme A biosynthesis; CoA from (R)-pantothenate: step 4/5. Reversibly transfers an adenylyl group from ATP to 4'-phosphopantetheine, yielding dephospho-CoA (dPCoA) and pyrophosphate. In Wolinella succinogenes (strain ATCC 29543 / DSM 1740 / CCUG 13145 / JCM 31913 / LMG 7466 / NCTC 11488 / FDC 602W) (Vibrio succinogenes), this protein is Phosphopantetheine adenylyltransferase.